Reading from the N-terminus, the 66-residue chain is U8-myrmicitoxin-Tb1a (66 aa).

An N-terminal signal peptide occupies residues 1–26; sequence MKLSFLSLAFAVIFVMAIMYAPQVEA. Residues 27-50 constitute a propeptide that is removed on maturation; sequence KASADADADADAAASADALAKASA.

Expressed by the venom gland.

It is found in the secreted. Functionally, in vivo, this neurotoxin paralyzes about 50% of blowflies (L.caesar) one hour after intrathoracic injection, when tested at high doses (54 nmol/g). In Tetramorium bicarinatum (Tramp ant), this protein is U8-myrmicitoxin-Tb1a.